The sequence spans 251 residues: Triosephosphate isomerase (251 aa).

Residue 9–11 coordinates substrate; that stretch reads NWK. H95 serves as the catalytic Electrophile. E167 acts as the Proton acceptor in catalysis. Substrate contacts are provided by residues G173, S213, and 234–235; that span reads GG.

This sequence belongs to the triosephosphate isomerase family. Homodimer.

The protein localises to the cytoplasm. It catalyses the reaction D-glyceraldehyde 3-phosphate = dihydroxyacetone phosphate. It functions in the pathway carbohydrate biosynthesis; gluconeogenesis. Its pathway is carbohydrate degradation; glycolysis; D-glyceraldehyde 3-phosphate from glycerone phosphate: step 1/1. Functionally, involved in the gluconeogenesis. Catalyzes stereospecifically the conversion of dihydroxyacetone phosphate (DHAP) to D-glyceraldehyde-3-phosphate (G3P). This Carboxydothermus hydrogenoformans (strain ATCC BAA-161 / DSM 6008 / Z-2901) protein is Triosephosphate isomerase.